The sequence spans 97 residues: HssA/B-like protein 44 (97 aa).

2 disordered regions span residues 1-22 and 62-97; these read MTLF…SSIA and ASTS…CGCN. Positions 72 to 84 are enriched in basic residues; sequence RPGRGHGGPHGHG. A compositionally biased stretch (gly residues) spans 85–97; it reads RGGSGSGSSCGCN.

The protein belongs to the hssA/B family.

The sequence is that of HssA/B-like protein 44 (hssl44) from Dictyostelium discoideum (Social amoeba).